A 169-amino-acid polypeptide reads, in one-letter code: Crossover junction endodeoxyribonuclease RuvC (169 aa).

Active-site residues include D7, E67, and D140. Mg(2+)-binding residues include D7, E67, and D140.

This sequence belongs to the RuvC family. In terms of assembly, homodimer which binds Holliday junction (HJ) DNA. The HJ becomes 2-fold symmetrical on binding to RuvC with unstacked arms; it has a different conformation from HJ DNA in complex with RuvA. In the full resolvosome a probable DNA-RuvA(4)-RuvB(12)-RuvC(2) complex forms which resolves the HJ. Requires Mg(2+) as cofactor.

Its subcellular location is the cytoplasm. The catalysed reaction is Endonucleolytic cleavage at a junction such as a reciprocal single-stranded crossover between two homologous DNA duplexes (Holliday junction).. In terms of biological role, the RuvA-RuvB-RuvC complex processes Holliday junction (HJ) DNA during genetic recombination and DNA repair. Endonuclease that resolves HJ intermediates. Cleaves cruciform DNA by making single-stranded nicks across the HJ at symmetrical positions within the homologous arms, yielding a 5'-phosphate and a 3'-hydroxyl group; requires a central core of homology in the junction. The consensus cleavage sequence is 5'-(A/T)TT(C/G)-3'. Cleavage occurs on the 3'-side of the TT dinucleotide at the point of strand exchange. HJ branch migration catalyzed by RuvA-RuvB allows RuvC to scan DNA until it finds its consensus sequence, where it cleaves and resolves the cruciform DNA. The polypeptide is Crossover junction endodeoxyribonuclease RuvC (Clostridioides difficile (strain 630) (Peptoclostridium difficile)).